The primary structure comprises 296 residues: Inactive uridine phosphorylase B (296 aa).

This sequence belongs to the PNP/UDP phosphorylase family. As to quaternary structure, homodimer.

This Schistosoma mansoni (Blood fluke) protein is Inactive uridine phosphorylase B.